The primary structure comprises 232 residues: 5'-methylthioadenosine/S-adenosylhomocysteine nucleosidase (232 aa).

The active-site Proton acceptor is Glu-12. Substrate-binding positions include Gly-78, Val-153, and 174–175; that span reads ME. The Proton donor role is filled by Asp-198.

The protein belongs to the PNP/UDP phosphorylase family. MtnN subfamily.

The catalysed reaction is S-adenosyl-L-homocysteine + H2O = S-(5-deoxy-D-ribos-5-yl)-L-homocysteine + adenine. It catalyses the reaction S-methyl-5'-thioadenosine + H2O = 5-(methylsulfanyl)-D-ribose + adenine. The enzyme catalyses 5'-deoxyadenosine + H2O = 5-deoxy-D-ribose + adenine. Its pathway is amino-acid biosynthesis; L-methionine biosynthesis via salvage pathway; S-methyl-5-thio-alpha-D-ribose 1-phosphate from S-methyl-5'-thioadenosine (hydrolase route): step 1/2. Catalyzes the irreversible cleavage of the glycosidic bond in both 5'-methylthioadenosine (MTA) and S-adenosylhomocysteine (SAH/AdoHcy) to adenine and the corresponding thioribose, 5'-methylthioribose and S-ribosylhomocysteine, respectively. Also cleaves 5'-deoxyadenosine, a toxic by-product of radical S-adenosylmethionine (SAM) enzymes, into 5-deoxyribose and adenine. The polypeptide is 5'-methylthioadenosine/S-adenosylhomocysteine nucleosidase (Photobacterium profundum (strain SS9)).